Reading from the N-terminus, the 404-residue chain is Argininosuccinate synthase (404 aa).

ATP-binding positions include 10-18 (AYSGGLDTS) and Ala37. The L-citrulline site is built by Tyr90 and Ser95. Gly120 is an ATP binding site. 3 residues coordinate L-aspartate: Thr122, Asn126, and Asp127. Asn126 contributes to the L-citrulline binding site. Residues Arg130, Ser181, Ser190, Glu266, and Tyr278 each contribute to the L-citrulline site. Residues 173–200 (DKRGESPFSTDANLLHTSSEGKVLEDPW) form a disordered region. Polar residues predominate over residues 179–192 (PFSTDANLLHTSSE).

The protein belongs to the argininosuccinate synthase family. Type 1 subfamily. As to quaternary structure, homotetramer.

The protein resides in the cytoplasm. The enzyme catalyses L-citrulline + L-aspartate + ATP = 2-(N(omega)-L-arginino)succinate + AMP + diphosphate + H(+). It functions in the pathway amino-acid biosynthesis; L-arginine biosynthesis; L-arginine from L-ornithine and carbamoyl phosphate: step 2/3. The chain is Argininosuccinate synthase from Novosphingobium aromaticivorans (strain ATCC 700278 / DSM 12444 / CCUG 56034 / CIP 105152 / NBRC 16084 / F199).